Here is a 287-residue protein sequence, read N- to C-terminus: Glutamate racemase (287 aa).

Residues 1 to 15 (MATKPQDANTTSREA) show a composition bias toward polar residues. The segment at 1-25 (MATKPQDANTTSREAITSKADSPPR) is disordered. Residues 32–33 (DS) and 64–65 (YG) contribute to the substrate site. C96 acts as the Proton donor/acceptor in catalysis. 97-98 (NT) is a binding site for substrate. C208 acts as the Proton donor/acceptor in catalysis. A substrate-binding site is contributed by 209-210 (TH).

The protein belongs to the aspartate/glutamate racemases family.

It carries out the reaction L-glutamate = D-glutamate. It participates in cell wall biogenesis; peptidoglycan biosynthesis. In terms of biological role, provides the (R)-glutamate required for cell wall biosynthesis. This Yersinia pseudotuberculosis serotype IB (strain PB1/+) protein is Glutamate racemase.